Here is a 48-residue protein sequence, read N- to C-terminus: Acidic phospholipase A2 (48 aa).

Positions 27, 29, and 31 each coordinate Ca(2+). Cysteine 28 and cysteine 44 form a disulfide bridge. Histidine 47 is an active-site residue. Aspartate 48 contacts Ca(2+).

The protein belongs to the phospholipase A2 family. Group II subfamily. D49 sub-subfamily. As to quaternary structure, monomer. Ca(2+) is required as a cofactor. Expressed by the venom gland.

It is found in the secreted. The enzyme catalyses a 1,2-diacyl-sn-glycero-3-phosphocholine + H2O = a 1-acyl-sn-glycero-3-phosphocholine + a fatty acid + H(+). Inhibited by EDTA. Inhibited by Ba(2+), Cu(+), Fe(2+) and Zn(2+) ions and, to a lesser extent, by Mn(2+) and Mg(2+) ions. Snake venom phospholipase A2 (PLA2) that shows myotoxicity and induces paw edema in mice. Exhibits indirect hemolytic activity. Inhibits platelet aggregation induced by ADP and collagen. PLA2 catalyzes the calcium-dependent hydrolysis of the 2-acyl groups in 3-sn-phosphoglycerides. In Bothrops pauloensis (Neuwied's lancehead), this protein is Acidic phospholipase A2.